The primary structure comprises 546 residues: Chaperonin GroEL (546 aa).

Residues 30-33 (TLGP), K51, 87-91 (DGTTT), G415, 479-481 (NAA), and D495 contribute to the ATP site.

The protein belongs to the chaperonin (HSP60) family. In terms of assembly, forms a cylinder of 14 subunits composed of two heptameric rings stacked back-to-back. Interacts with the co-chaperonin GroES.

Its subcellular location is the cytoplasm. It catalyses the reaction ATP + H2O + a folded polypeptide = ADP + phosphate + an unfolded polypeptide.. Functionally, together with its co-chaperonin GroES, plays an essential role in assisting protein folding. The GroEL-GroES system forms a nano-cage that allows encapsulation of the non-native substrate proteins and provides a physical environment optimized to promote and accelerate protein folding. The polypeptide is Chaperonin GroEL (Allochromatium vinosum (Chromatium vinosum)).